We begin with the raw amino-acid sequence, 471 residues long: MKIKTRFAPSPTGYLHVGGARTALYSWLFARHHGGEFVLRIEDTDLERSTPEAIEAIMDGMNWLNLEWDEGPYFQTKRFDRYNAVIDEMLEAGTAYKCYCSKERLEQLREEQMAKGEKPRYDGRCRHSYEHHADDEPCVVRFANPQDGSVIFDDQIRGPIEFSNQELDDLIIRRTDGSPTYNFCVVVDDWDMEITHVIRGEDHINNTPRQINILKALNAPVPMYAHVSMINGDDGKKLSKRHGAVSVMQYRDDGYLPEALLNYLVRLGWSSGDQEIFTREEMIKLFSLGAVSKSASAFNTDKLLWLNHHYINTLAPEYVATHLQWHIEQENIDTRNGPQLAELVKLLGERCKTLKEMAQSCRYFYEDFSEFDADAAKKHLRPVARQPLEVVRDKLSAITDWSAENVHHAIQATADELEVGMGKVGMPLRVAVTGAGQSPALDVTVHAIGKTRSIERINKALGFIAERESQQ.

The short motif at 9-19 is the 'HIGH' region element; it reads PSPTGYLHVGG. Residues C98, C100, C125, and H127 each coordinate Zn(2+). A 'KMSKS' region motif is present at residues 237-241; that stretch reads KLSKR. Residue K240 participates in ATP binding.

The protein belongs to the class-I aminoacyl-tRNA synthetase family. Glutamate--tRNA ligase type 1 subfamily. Monomer. The cofactor is Zn(2+).

The protein resides in the cytoplasm. The catalysed reaction is tRNA(Glu) + L-glutamate + ATP = L-glutamyl-tRNA(Glu) + AMP + diphosphate. Functionally, catalyzes the attachment of glutamate to tRNA(Glu) in a two-step reaction: glutamate is first activated by ATP to form Glu-AMP and then transferred to the acceptor end of tRNA(Glu). The sequence is that of Glutamate--tRNA ligase from Salmonella enteritidis PT4 (strain P125109).